Here is a 686-residue protein sequence, read N- to C-terminus: Soluble guanylate cyclase gcy-34 (686 aa).

His105 serves as a coordination point for heme. Coiled-coil stretches lie at residues 306–335 and 398–432; these read KKHMNAMTKEEREQEVEAMEEEVESNELTQ and VEVNLQLEANNEQLETMTHELEVERQKTDSILKDM. The 129-residue stretch at 455-583 folds into the Guanylate cyclase domain; the sequence is TVMFCDLPAF…ETVTLASQME (129 aa). Residues Asp460 and Asp504 each contribute to the Mg(2+) site.

The protein belongs to the adenylyl cyclase class-4/guanylyl cyclase family. Heterodimer; with other soluble guanylate cyclases. It depends on heme as a cofactor. In terms of tissue distribution, expressed in a small number of neurons, corresponding to URX, AQR and PQR neurons.

It localises to the cytoplasm. The catalysed reaction is GTP = 3',5'-cyclic GMP + diphosphate. Its activity is regulated as follows. May be regulated by molecular oxygen. Probably not activated by nitric oxide (NO). Functionally, synthesizes cyclic GMP (cGMP) from GTP. May be involved in sensitivity to quinine by regulating egl-4 activity through the production of cGMP. The protein is Soluble guanylate cyclase gcy-34 (gcy-34) of Caenorhabditis elegans.